The primary structure comprises 278 residues: 4-hydroxy-3-methylbut-2-enyl diphosphate reductase (278 aa).

Cysteine 12 lines the [4Fe-4S] cluster pocket. (2E)-4-hydroxy-3-methylbut-2-enyl diphosphate is bound by residues histidine 41 and histidine 74. Dimethylallyl diphosphate contacts are provided by histidine 41 and histidine 74. Histidine 41 and histidine 74 together coordinate isopentenyl diphosphate. Cysteine 96 provides a ligand contact to [4Fe-4S] cluster. Histidine 124 provides a ligand contact to (2E)-4-hydroxy-3-methylbut-2-enyl diphosphate. Histidine 124 is a binding site for dimethylallyl diphosphate. Histidine 124 serves as a coordination point for isopentenyl diphosphate. Glutamate 126 (proton donor) is an active-site residue. Residue threonine 161 participates in (2E)-4-hydroxy-3-methylbut-2-enyl diphosphate binding. Residue cysteine 189 coordinates [4Fe-4S] cluster. Residues serine 217, asparagine 219, and serine 261 each coordinate (2E)-4-hydroxy-3-methylbut-2-enyl diphosphate. 3 residues coordinate dimethylallyl diphosphate: serine 217, asparagine 219, and serine 261. Positions 217, 219, and 261 each coordinate isopentenyl diphosphate.

It belongs to the IspH family. Requires [4Fe-4S] cluster as cofactor.

It catalyses the reaction isopentenyl diphosphate + 2 oxidized [2Fe-2S]-[ferredoxin] + H2O = (2E)-4-hydroxy-3-methylbut-2-enyl diphosphate + 2 reduced [2Fe-2S]-[ferredoxin] + 2 H(+). The enzyme catalyses dimethylallyl diphosphate + 2 oxidized [2Fe-2S]-[ferredoxin] + H2O = (2E)-4-hydroxy-3-methylbut-2-enyl diphosphate + 2 reduced [2Fe-2S]-[ferredoxin] + 2 H(+). It functions in the pathway isoprenoid biosynthesis; dimethylallyl diphosphate biosynthesis; dimethylallyl diphosphate from (2E)-4-hydroxy-3-methylbutenyl diphosphate: step 1/1. Its pathway is isoprenoid biosynthesis; isopentenyl diphosphate biosynthesis via DXP pathway; isopentenyl diphosphate from 1-deoxy-D-xylulose 5-phosphate: step 6/6. Its function is as follows. Catalyzes the conversion of 1-hydroxy-2-methyl-2-(E)-butenyl 4-diphosphate (HMBPP) into a mixture of isopentenyl diphosphate (IPP) and dimethylallyl diphosphate (DMAPP). Acts in the terminal step of the DOXP/MEP pathway for isoprenoid precursor biosynthesis. The chain is 4-hydroxy-3-methylbut-2-enyl diphosphate reductase from Anaeromyxobacter sp. (strain K).